A 222-amino-acid polypeptide reads, in one-letter code: Methylthioribulose-1-phosphate dehydratase (222 aa).

Residues His94 and His96 each contribute to the Zn(2+) site.

The protein belongs to the aldolase class II family. MtnB subfamily. Zn(2+) serves as cofactor.

The catalysed reaction is 5-(methylsulfanyl)-D-ribulose 1-phosphate = 5-methylsulfanyl-2,3-dioxopentyl phosphate + H2O. It functions in the pathway amino-acid biosynthesis; L-methionine biosynthesis via salvage pathway; L-methionine from S-methyl-5-thio-alpha-D-ribose 1-phosphate: step 2/6. Its function is as follows. Catalyzes the dehydration of methylthioribulose-1-phosphate (MTRu-1-P) into 2,3-diketo-5-methylthiopentyl-1-phosphate (DK-MTP-1-P). This Yersinia pseudotuberculosis serotype O:1b (strain IP 31758) protein is Methylthioribulose-1-phosphate dehydratase.